The chain runs to 135 residues: Small ribosomal subunit protein bS16 (135 aa).

Residues 106–135 (TERRQKRLVVKSRRRQAKKEAEGKAAGAEA) are disordered. Over residues 109-122 (RQKRLVVKSRRRQA) the composition is skewed to basic residues.

It belongs to the bacterial ribosomal protein bS16 family.

The polypeptide is Small ribosomal subunit protein bS16 (Chlorobium phaeobacteroides (strain DSM 266 / SMG 266 / 2430)).